Here is a 400-residue protein sequence, read N- to C-terminus: Pyruvate dehydrogenase E1 component subunit beta-4, chloroplastic (400 aa).

Positions 1–34 (MAAASSLHAAPRVGSSSSFSSSSSAGRRSASAAR) are disordered. The transit peptide at 1–57 (MAAASSLHAAPRVGSSSSFSSSSSAGRRSASAARSVRVAAAAGSCAARRAGGRMVAR) directs the protein to the chloroplast. The span at 9 to 34 (AAPRVGSSSSFSSSSSAGRRSASAAR) shows a compositional bias: low complexity. Glu-136 lines the thiamine diphosphate pocket. K(+)-binding residues include Ile-189, Ala-237, Ile-238, and Asn-242.

As to quaternary structure, tetramer of 2 alpha and 2 beta subunits. It depends on thiamine diphosphate as a cofactor.

The protein localises to the plastid. The protein resides in the chloroplast. The enzyme catalyses N(6)-[(R)-lipoyl]-L-lysyl-[protein] + pyruvate + H(+) = N(6)-[(R)-S(8)-acetyldihydrolipoyl]-L-lysyl-[protein] + CO2. Its function is as follows. The pyruvate dehydrogenase complex catalyzes the overall conversion of pyruvate to acetyl-CoA and CO(2). It contains multiple copies of three enzymatic components: pyruvate dehydrogenase (E1), dihydrolipoamide acetyltransferase (E2) and lipoamide dehydrogenase (E3). This is Pyruvate dehydrogenase E1 component subunit beta-4, chloroplastic from Oryza sativa subsp. japonica (Rice).